We begin with the raw amino-acid sequence, 312 residues long: Glutathione synthetase (312 aa).

The region spanning 125-309 (KIFVTEFPDL…IAALFWDAVE (185 aa)) is the ATP-grasp domain. Residue 151 to 207 (RREFGDIILKPLYGNGGAGVFHLADGDRNLTSLLEMFGQLFREPFIAQRYLKDVRAG) coordinates ATP. Positions 280 and 282 each coordinate Mg(2+).

The protein belongs to the prokaryotic GSH synthase family. The cofactor is Mg(2+). Requires Mn(2+) as cofactor.

It catalyses the reaction gamma-L-glutamyl-L-cysteine + glycine + ATP = glutathione + ADP + phosphate + H(+). It participates in sulfur metabolism; glutathione biosynthesis; glutathione from L-cysteine and L-glutamate: step 2/2. The chain is Glutathione synthetase from Brucella melitensis biotype 1 (strain ATCC 23456 / CCUG 17765 / NCTC 10094 / 16M).